A 250-amino-acid polypeptide reads, in one-letter code: Zinc finger protein lsy-27 (250 aa).

2 consecutive C2H2-type zinc fingers follow at residues 25–48 and 52–75; these read FVCS…QLMH and HTCM…RNEH. A C2H2-type 3; degenerate zinc finger spans residues 81–104; that stretch reads FTCGCCNWTFASKRQLTEHTKCIQ. Disordered stretches follow at residues 126–177 and 226–250; these read IQST…EAER and QKVK…QEIE. Over residues 148 to 165 the composition is skewed to low complexity; the sequence is SLSPSSSVSTSISSRDAS. Basic and acidic residues predominate over residues 239 to 250; sequence MIPEKHVKQEIE.

In terms of biological role, involved in regulating left/right asymmetric differentiation of the gustatory ASE neurons. Plays a role in modulating expression of LIM/homeobox protein lim-6. This chain is Zinc finger protein lsy-27, found in Caenorhabditis elegans.